The sequence spans 222 residues: Triosephosphate isomerase (222 aa).

9-11 lines the substrate pocket; it reads NLK. His-93 functions as the Electrophile in the catalytic mechanism. Glu-141 (proton acceptor) is an active-site residue. Residues Ile-146, Gly-181, and 202–203 each bind substrate; that span reads AS.

It belongs to the triosephosphate isomerase family. Homotetramer; dimer of dimers.

The protein localises to the cytoplasm. It catalyses the reaction D-glyceraldehyde 3-phosphate = dihydroxyacetone phosphate. Its pathway is carbohydrate biosynthesis; gluconeogenesis. It functions in the pathway carbohydrate degradation; glycolysis; D-glyceraldehyde 3-phosphate from glycerone phosphate: step 1/1. Functionally, involved in the gluconeogenesis. Catalyzes stereospecifically the conversion of dihydroxyacetone phosphate (DHAP) to D-glyceraldehyde-3-phosphate (G3P). This chain is Triosephosphate isomerase, found in Methanoculleus marisnigri (strain ATCC 35101 / DSM 1498 / JR1).